The following is a 547-amino-acid chain: Sensor histidine kinase CitA (547 aa).

At 1–23 (MSIYPMYTRKITHWFARRSFQNR) the chain is on the cytoplasmic side. The chain crosses the membrane as a helical span at residues 24 to 44 (IFLLILFTSTIVMLAMSWYLT). The Periplasmic portion of the chain corresponds to 45-180 (DITEERLHYQ…TIEQLENWLS (136 aa)). Residues Arg109, His112, Arg150, and Lys152 each coordinate citrate. The helical transmembrane segment at 181-201 (LQISSLLIPMAIMLLLLLFCA) threads the bilayer. At 202 to 547 (RRFSLHIKKQ…IPLTRDEHHG (346 aa)) the chain is on the cytoplasmic side. A PAS domain is found at 225-264 (IQQSVLFESVFEGLIAIDSDYKITAINQTARRLLNLSQPE). Residues 347–542 (AVQHEHRNLI…IFTLYIPLTR (196 aa)) enclose the Histidine kinase domain. His350 is subject to Phosphohistidine; by autocatalysis.

As to quaternary structure, homodimer. In vitro CitB and the CitA kinase domain form a complex, formation of which is enhanced by ATP. In terms of processing, autophosphorylated.

The protein localises to the cell inner membrane. The enzyme catalyses ATP + protein L-histidine = ADP + protein N-phospho-L-histidine.. Member of the two-component regulatory system CitA/CitB. Probably activates CitB by phosphorylation. The periplasmic domain binds H-citrate(2-), which is essential for induction of the citrate-fermentation genes. This chain is Sensor histidine kinase CitA (citA), found in Klebsiella pneumoniae.